Reading from the N-terminus, the 190-residue chain is GTP cyclohydrolase 1 (190 aa).

Zn(2+) is bound by residues C75, H78, and C146.

Belongs to the GTP cyclohydrolase I family. Homomer.

It carries out the reaction GTP + H2O = 7,8-dihydroneopterin 3'-triphosphate + formate + H(+). It participates in cofactor biosynthesis; 7,8-dihydroneopterin triphosphate biosynthesis; 7,8-dihydroneopterin triphosphate from GTP: step 1/1. This Campylobacter concisus (strain 13826) protein is GTP cyclohydrolase 1.